A 707-amino-acid polypeptide reads, in one-letter code: Serine/threonine protein kinase UL97 (707 aa).

Positions 1–14 are enriched in low complexity; it reads MSSALRSRARSASL. 4 disordered regions span residues 1–32, 115–146, 176–199, and 231–264; these read MSSALRSRARSASLGTTTEGWDPPPLRRPSRA, EKEDAASDKENLRRPVVPSTSSRGSAASGDGY, FTGGSDPSDSVSGVRGGRKRPLRP, and ESQDSAVASGPGRVPQPLSGSSGEESATAVEADS. Residues 115–127 show a composition bias toward basic and acidic residues; sequence EKEDAASDKENLR. Residues 178-188 show a composition bias toward low complexity; it reads GGSDPSDSVSG. ATP is bound by residues 337-345 and K359; that span reads LGQGSFGEV. The Proton acceptor role is filled by D456.

This sequence belongs to the protein kinase superfamily. Tyr protein kinase family. HCMV ganciclovir subfamily. In terms of assembly, interacts with UL83. Autophosphorylates on serine and threonine residues.

The protein resides in the virion. The enzyme catalyses L-seryl-[protein] + ATP = O-phospho-L-seryl-[protein] + ADP + H(+). It catalyses the reaction L-threonyl-[protein] + ATP = O-phospho-L-threonyl-[protein] + ADP + H(+). Serine/threonine protein kinase that plays important roles in several processes including nuclear viral egress, viral replication or regulation of host cell cycle progression. Participates in the acquisition of tegument during virion morphogenesis in the nucleus. Redistributes the host nuclear lamina by phosphorylating cellular Lamins-A/C. Plays a role in viral DNA synthesis by phosphorylating the DNA polymerase processivity factor UL44. Stimulates host cell cycle to support viral DNA synthesis by phosphorylating host retinoblastoma/RB1 protein. Additional substrates have been identified including host EF1D or H2B. Also phosphorylates host SAMHD1 and thereby counteracts its antiviral effect by reducing its dNTP hydrolase activity. The polypeptide is Serine/threonine protein kinase UL97 (UL97) (Human cytomegalovirus (strain Towne) (HHV-5)).